Reading from the N-terminus, the 67-residue chain is Penaeidin-4a (67 aa).

The first 19 residues, 1 to 19, serve as a signal peptide directing secretion; the sequence is MRLVVCLVFLASFALVCQG. 3 disulfide bridges follow: Cys42-Cys56, Cys45-Cys63, and Cys57-Cys64. Arg66 carries the post-translational modification Arginine amide.

The protein belongs to the penaeidin family.

The protein resides in the cytoplasmic granule. In terms of biological role, antibacterial and antifungal activity. Presents chitin-binding activity. The chain is Penaeidin-4a from Penaeus vannamei (Whiteleg shrimp).